We begin with the raw amino-acid sequence, 480 residues long: UDP-N-acetylmuramoylalanine--D-glutamate ligase (480 aa).

120 to 126 is a binding site for ATP; the sequence is GTNGKTT.

Belongs to the MurCDEF family.

It localises to the cytoplasm. It carries out the reaction UDP-N-acetyl-alpha-D-muramoyl-L-alanine + D-glutamate + ATP = UDP-N-acetyl-alpha-D-muramoyl-L-alanyl-D-glutamate + ADP + phosphate + H(+). The protein operates within cell wall biogenesis; peptidoglycan biosynthesis. In terms of biological role, cell wall formation. Catalyzes the addition of glutamate to the nucleotide precursor UDP-N-acetylmuramoyl-L-alanine (UMA). The chain is UDP-N-acetylmuramoylalanine--D-glutamate ligase from Nocardia farcinica (strain IFM 10152).